The primary structure comprises 387 residues: Lipid-A-disaccharide synthase (387 aa).

It belongs to the LpxB family.

The enzyme catalyses a lipid X + a UDP-2-N,3-O-bis[(3R)-3-hydroxyacyl]-alpha-D-glucosamine = a lipid A disaccharide + UDP + H(+). It functions in the pathway bacterial outer membrane biogenesis; LPS lipid A biosynthesis. Functionally, condensation of UDP-2,3-diacylglucosamine and 2,3-diacylglucosamine-1-phosphate to form lipid A disaccharide, a precursor of lipid A, a phosphorylated glycolipid that anchors the lipopolysaccharide to the outer membrane of the cell. This is Lipid-A-disaccharide synthase from Glaesserella parasuis serovar 5 (strain SH0165) (Haemophilus parasuis).